The sequence spans 420 residues: Gamma-glutamyl phosphate reductase (420 aa).

This sequence belongs to the gamma-glutamyl phosphate reductase family.

The protein resides in the cytoplasm. The enzyme catalyses L-glutamate 5-semialdehyde + phosphate + NADP(+) = L-glutamyl 5-phosphate + NADPH + H(+). It participates in amino-acid biosynthesis; L-proline biosynthesis; L-glutamate 5-semialdehyde from L-glutamate: step 2/2. Functionally, catalyzes the NADPH-dependent reduction of L-glutamate 5-phosphate into L-glutamate 5-semialdehyde and phosphate. The product spontaneously undergoes cyclization to form 1-pyrroline-5-carboxylate. In Neisseria meningitidis serogroup B (strain ATCC BAA-335 / MC58), this protein is Gamma-glutamyl phosphate reductase.